Reading from the N-terminus, the 266-residue chain is Putative pyruvate, phosphate dikinase regulatory protein (266 aa).

Position 149–156 (149–156 (GVSRTSKT)) interacts with ADP.

This sequence belongs to the pyruvate, phosphate/water dikinase regulatory protein family. PDRP subfamily.

The catalysed reaction is N(tele)-phospho-L-histidyl/L-threonyl-[pyruvate, phosphate dikinase] + ADP = N(tele)-phospho-L-histidyl/O-phospho-L-threonyl-[pyruvate, phosphate dikinase] + AMP + H(+). It carries out the reaction N(tele)-phospho-L-histidyl/O-phospho-L-threonyl-[pyruvate, phosphate dikinase] + phosphate + H(+) = N(tele)-phospho-L-histidyl/L-threonyl-[pyruvate, phosphate dikinase] + diphosphate. In terms of biological role, bifunctional serine/threonine kinase and phosphorylase involved in the regulation of the pyruvate, phosphate dikinase (PPDK) by catalyzing its phosphorylation/dephosphorylation. This is Putative pyruvate, phosphate dikinase regulatory protein from Geobacillus thermodenitrificans (strain NG80-2).